The following is a 603-amino-acid chain: MTMYATMTTLALTSLIPPILGALINPNKKNSYPHYVKSIIASTFIISLFPTTMFMCLDQETIISNWHWATTQTTQLSLSFKLDYFSMTFIPVALFVTWSIMEFSLWYMDSDPNINQFFKYLLIFLITMLILVTANNLFQLFIGWEGVGIMSFLLISWWYARTDANTAAIQAILYNRIGDIGFVLALAWFLLHSNSWDPQQMILLSTNTDLTPLLGFLLAAAGKSAQLGLHPWLPSAMEGPTPVSALLHSSTMVVAGIFLLIRFYPLAENNPLIQTLTLCLGAITTLFAAVCALTQNDIKKIVAFSTSSQLGLMMVTIGINQPHLAFLHICTHAFFKAMLFMCSGSIIHNLNNEQDIRKMGGLLKTMPLTSTSLTIGSLALAGMPFLTGFYSKDLIIETANMSYTNAWALSITLIATSLTSAYSTRMILLTLTGQPRFPTLTNINENNPTLLNPIKRLTIGSLFAGFLITNNILPMSTPQVTIPLYLKLTALGVTSLGLLTALDLNYLTSKLKMKSPLYTFHFSNMLGFYPNIMHRSIPYLGLLTSQNLPLLLLDLTWLEKLLPKTISQYQISASITTSTQKGMIKLYFLSFFFPLILTLLLIT.

Transmembrane regions (helical) follow at residues 4 to 24 (YATM…GALI), 38 to 58 (SIIA…MCLD), 87 to 107 (MTFI…SLWY), 122 to 142 (LIFL…QLFI), 144 to 160 (WEGV…WWYA), 171 to 191 (AILY…WFLL), 211 to 233 (TPLL…HPWL), 241 to 261 (TPVS…FLLI), 272 to 292 (LIQT…AVCA), 301 to 320 (IVAF…IGIN), 325 to 347 (AFLH…GSII), 370 to 390 (STSL…TGFY), 405 to 422 (NAWA…TSAY), 457 to 477 (LTIG…PMST), 482 to 502 (IPLY…LTAL), and 582 to 602 (GMIK…LLLI).

The protein belongs to the complex I subunit 5 family. Core subunit of respiratory chain NADH dehydrogenase (Complex I) which is composed of 45 different subunits.

Its subcellular location is the mitochondrion inner membrane. It catalyses the reaction a ubiquinone + NADH + 5 H(+)(in) = a ubiquinol + NAD(+) + 4 H(+)(out). Functionally, core subunit of the mitochondrial membrane respiratory chain NADH dehydrogenase (Complex I) which catalyzes electron transfer from NADH through the respiratory chain, using ubiquinone as an electron acceptor. Essential for the catalytic activity and assembly of complex I. This chain is NADH-ubiquinone oxidoreductase chain 5 (MT-ND5), found in Pan troglodytes (Chimpanzee).